Reading from the N-terminus, the 283-residue chain is Phosphatidylglycerol--prolipoprotein diacylglyceryl transferase (283 aa).

The next 7 membrane-spanning stretches (helical) occupy residues Ile21 to Ala41, Tyr62 to Tyr82, Phe106 to Tyr126, Leu136 to Ile156, Pro190 to Ala210, Gly218 to Tyr238, and Leu252 to Tyr272. Arg155 contacts a 1,2-diacyl-sn-glycero-3-phospho-(1'-sn-glycerol).

This sequence belongs to the Lgt family.

The protein localises to the cell inner membrane. It carries out the reaction L-cysteinyl-[prolipoprotein] + a 1,2-diacyl-sn-glycero-3-phospho-(1'-sn-glycerol) = an S-1,2-diacyl-sn-glyceryl-L-cysteinyl-[prolipoprotein] + sn-glycerol 1-phosphate + H(+). It functions in the pathway protein modification; lipoprotein biosynthesis (diacylglyceryl transfer). Its function is as follows. Catalyzes the transfer of the diacylglyceryl group from phosphatidylglycerol to the sulfhydryl group of the N-terminal cysteine of a prolipoprotein, the first step in the formation of mature lipoproteins. The protein is Phosphatidylglycerol--prolipoprotein diacylglyceryl transferase of Helicobacter acinonychis (strain Sheeba).